The primary structure comprises 389 residues: MPLPTNQLRLAMVAGEPSGDLLAASLLGGLQARLPASTHYYGIGGQRMLAHGFDSHWQMDKLTVRGYVEALGQIPEILRIRGELKRQLLAERPDAFIGVDAPDFNFNVEQAARDAGIPSIHFVCPSIWAWRGGRIKKIAKSVDHMLCLFPFEPAILDKAGVASTYVGHPLADEIPLEPDTHGARIALGLPADGPVIAVLPGSRRSEIALIGPTFFAAMALMQEREPGVRFVMPAATPALRELLQPLVAAHPQLALTITDGRSQVAMTAADAILVKSGTVTLEAALLKKPMVISYKVPWLTGQIMRRQGYLPYVGLPNILAGRFVVPELLQHFATPEALADATLTQLRDDANRRTLTEVFTEMHLSLRQNTAAKAAEAVVRVLEQRKGRA.

It belongs to the LpxB family.

The enzyme catalyses a lipid X + a UDP-2-N,3-O-bis[(3R)-3-hydroxyacyl]-alpha-D-glucosamine = a lipid A disaccharide + UDP + H(+). It functions in the pathway bacterial outer membrane biogenesis; LPS lipid A biosynthesis. Functionally, condensation of UDP-2,3-diacylglucosamine and 2,3-diacylglucosamine-1-phosphate to form lipid A disaccharide, a precursor of lipid A, a phosphorylated glycolipid that anchors the lipopolysaccharide to the outer membrane of the cell. This Burkholderia vietnamiensis (strain G4 / LMG 22486) (Burkholderia cepacia (strain R1808)) protein is Lipid-A-disaccharide synthase.